Reading from the N-terminus, the 211-residue chain is Thiamine-phosphate synthase (211 aa).

4-amino-2-methyl-5-(diphosphooxymethyl)pyrimidine-binding positions include 37 to 41 and asparagine 69; that span reads QLREK. Mg(2+) contacts are provided by aspartate 70 and glutamate 89. Serine 108 contacts 4-amino-2-methyl-5-(diphosphooxymethyl)pyrimidine. Residue 134-136 coordinates 2-[(2R,5Z)-2-carboxy-4-methylthiazol-5(2H)-ylidene]ethyl phosphate; sequence TTT. Residue lysine 137 participates in 4-amino-2-methyl-5-(diphosphooxymethyl)pyrimidine binding. 2-[(2R,5Z)-2-carboxy-4-methylthiazol-5(2H)-ylidene]ethyl phosphate is bound by residues glycine 163 and 183 to 184; that span reads VS.

This sequence belongs to the thiamine-phosphate synthase family. The cofactor is Mg(2+).

The catalysed reaction is 2-[(2R,5Z)-2-carboxy-4-methylthiazol-5(2H)-ylidene]ethyl phosphate + 4-amino-2-methyl-5-(diphosphooxymethyl)pyrimidine + 2 H(+) = thiamine phosphate + CO2 + diphosphate. It catalyses the reaction 2-(2-carboxy-4-methylthiazol-5-yl)ethyl phosphate + 4-amino-2-methyl-5-(diphosphooxymethyl)pyrimidine + 2 H(+) = thiamine phosphate + CO2 + diphosphate. The enzyme catalyses 4-methyl-5-(2-phosphooxyethyl)-thiazole + 4-amino-2-methyl-5-(diphosphooxymethyl)pyrimidine + H(+) = thiamine phosphate + diphosphate. Its pathway is cofactor biosynthesis; thiamine diphosphate biosynthesis; thiamine phosphate from 4-amino-2-methyl-5-diphosphomethylpyrimidine and 4-methyl-5-(2-phosphoethyl)-thiazole: step 1/1. Its function is as follows. Condenses 4-methyl-5-(beta-hydroxyethyl)thiazole monophosphate (THZ-P) and 2-methyl-4-amino-5-hydroxymethyl pyrimidine pyrophosphate (HMP-PP) to form thiamine monophosphate (TMP). The sequence is that of Thiamine-phosphate synthase from Enterococcus faecalis (strain ATCC 700802 / V583).